A 448-amino-acid chain; its full sequence is Methionine aminopeptidase 2 (448 aa).

Positions 1-94 (MAAQVTDALK…PRVLLSNLFP (94 aa)) are disordered. Positions 37 to 50 (AEAEDSDDDDEEPV) are enriched in acidic residues. Positions 61-74 (KKKRKRKKKPKKKA) are enriched in basic residues. Substrate is bound at residue histidine 201. Residues aspartate 221, aspartate 232, and histidine 301 each coordinate a divalent metal cation. Residue histidine 309 coordinates substrate. A divalent metal cation is bound by residues glutamate 334 and glutamate 429.

It belongs to the peptidase M24A family. Methionine aminopeptidase eukaryotic type 2 subfamily. Co(2+) is required as a cofactor. The cofactor is Zn(2+). It depends on Mn(2+) as a cofactor. Fe(2+) serves as cofactor.

Its subcellular location is the cytoplasm. It catalyses the reaction Release of N-terminal amino acids, preferentially methionine, from peptides and arylamides.. Its function is as follows. Cotranslationally removes the N-terminal methionine from nascent proteins. The N-terminal methionine is often cleaved when the second residue in the primary sequence is small and uncharged (Met-Ala-, Cys, Gly, Pro, Ser, Thr, or Val). This Botryotinia fuckeliana (strain B05.10) (Noble rot fungus) protein is Methionine aminopeptidase 2.